Reading from the N-terminus, the 126-residue chain is Small ribosomal subunit protein bS6 (126 aa).

The disordered stretch occupies residues 99-126; sequence PLPAPRVVPGTEAPEPAQAAETPEPEAS. Over residues 107 to 120 the composition is skewed to low complexity; that stretch reads PGTEAPEPAQAAET.

The protein belongs to the bacterial ribosomal protein bS6 family.

Its function is as follows. Binds together with bS18 to 16S ribosomal RNA. The protein is Small ribosomal subunit protein bS6 of Synechococcus sp. (strain CC9902).